The chain runs to 430 residues: DD-carboxypeptidase/endopeptidase Mpg (430 aa).

His-295, Asp-299, and His-375 together coordinate Zn(2+).

It belongs to the peptidase M23B family. In terms of assembly, monomer. It depends on Zn(2+) as a cofactor. In terms of processing, likely to be synthesized as a proenzyme. The cleavage of the N-terminal domain is probably required for the activation of the enzyme.

The protein resides in the cell outer membrane. In terms of biological role, has both endopeptidase and DD-carboxypeptidase activities. Degrades cell wall peptidoglycan (PG) to allow consummate expression of pili. This Neisseria meningitidis serogroup B (strain ATCC BAA-335 / MC58) protein is DD-carboxypeptidase/endopeptidase Mpg.